A 150-amino-acid chain; its full sequence is Large ribosomal subunit protein bL9 (150 aa).

This sequence belongs to the bacterial ribosomal protein bL9 family.

Functionally, binds to the 23S rRNA. The protein is Large ribosomal subunit protein bL9 of Streptococcus pyogenes serotype M18 (strain MGAS8232).